The sequence spans 242 residues: Anamorsin homolog (242 aa).

An N-terminal SAM-like domain region spans residues 1–140 (MMNFADTLVI…NVTAENPDFL (140 aa)). Positions 140–159 (LSNEDDNDEHSSDGEAHENA) are disordered. Residues 141-162 (SNEDDNDEHSSDGEAHENAEDN) form a linker region. Basic and acidic residues predominate over residues 148–159 (EHSSDGEAHENA). [4Fe-4S] cluster contacts are provided by Cys-205, Cys-208, Cys-216, and Cys-219. 2 short sequence motifs (cx2C motif) span residues 205 to 208 (CGNC) and 216 to 219 (CASC). The interval 205-219 (CGNCYLGDAFRCASC) is fe-S binding site B.

Belongs to the anamorsin family. In terms of assembly, monomer. The cofactor is [4Fe-4S] cluster.

The protein resides in the cytoplasm. It localises to the mitochondrion intermembrane space. Functionally, component of the cytosolic iron-sulfur (Fe-S) protein assembly (CIA) machinery. Required for the maturation of extramitochondrial Fe-S proteins. Part of an electron transfer chain functioning in an early step of cytosolic Fe-S biogenesis, facilitating the de novo assembly of a [4Fe-4S] cluster on the cytosolic Fe-S scaffold complex. Electrons are transferred from NADPH via a FAD- and FMN-containing diflavin oxidoreductase. Together with the diflavin oxidoreductase, also required for the assembly of the diferric tyrosyl radical cofactor of ribonucleotide reductase (RNR), probably by providing electrons for reduction during radical cofactor maturation in the catalytic small subunit. In Plasmodium vivax (strain Salvador I), this protein is Anamorsin homolog.